A 1059-amino-acid polypeptide reads, in one-letter code: Cellulose synthase catalytic subunit A [UDP-forming] (1059 aa).

Disordered stretches follow at residues 1–159 (MDRN…RFDT) and 174–220 (MRQH…KHVA). Residues 15 to 36 (NNINSSGGSYNNSMNNSSNNIG) are compositionally biased toward low complexity. Composition is skewed to polar residues over residues 40–57 (GNNQ…QSNL) and 142–154 (NSPS…TSGG). Residues 181-194 (QEQQQQQQQQQQQQ) show a composition bias toward low complexity. Residues 204–219 (QKKKPSSMQLSKKKHV) show a composition bias toward basic residues. 3 helical membrane passes run 246–266 (FSHA…IFYF), 280–300 (ITFS…LGSA), and 306–323 (FTNP…QILA). Residues 328–628 (KHPTVMMYVC…FLGLLDADQQ (301 aa)) form a catalytic subdomain A region. Residue D370 is part of the active site. Positions 624 and 626 each coordinate substrate. Residues 701–761 (QPLYDIGGIM…EQRKRWAQGA (61 aa)) form a catalytic subdomain B region. The active site involves D717. Helical transmembrane passes span 790–810 (IYPF…IMSI) and 813–833 (VPIV…PVMV). The disordered stretch occupies residues 933–953 (DNAQESSGKHKAEQSFRTSNK). The segment covering 939-953 (SGKHKAEQSFRTSNK) has biased composition (basic and acidic residues). 3 helical membrane-spanning segments follow: residues 963–983 (LFLP…SAVL), 993–1013 (WLLV…WSFI), and 1035–1055 (IVLF…KVCI).

The protein belongs to the glycosyltransferase 2 family. Mg(2+) is required as a cofactor.

Its subcellular location is the membrane. The catalysed reaction is [(1-&gt;4)-beta-D-glucosyl](n) + UDP-alpha-D-glucose = [(1-&gt;4)-beta-D-glucosyl](n+1) + UDP + H(+). It participates in glycan metabolism; amoeba cellulose biosynthesis. In terms of biological role, catalytic subunit of cellulose synthase. It incorporates glucose from uridine 5'-diphosphate glucose (UDP-alpha-D-glucose) to cellulose (a (1-&gt;4)-beta-D-glucan), which is produced as an extracellular component for mechanical and chemical protection at the onset of the stalk formation, when the cells exhibit multicellular behavior during culmination. This chain is Cellulose synthase catalytic subunit A [UDP-forming] (dcsA), found in Dictyostelium discoideum (Social amoeba).